We begin with the raw amino-acid sequence, 302 residues long: Small ribosomal subunit protein uS2 (302 aa).

A disordered region spans residues 275-302 (EGEGESEAEPVVAKKKPVRAKRPAVKAE). Residues 287–302 (AKKKPVRAKRPAVKAE) are compositionally biased toward basic residues.

It belongs to the universal ribosomal protein uS2 family.

The chain is Small ribosomal subunit protein uS2 from Opitutus terrae (strain DSM 11246 / JCM 15787 / PB90-1).